Here is a 511-residue protein sequence, read N- to C-terminus: Endoglucanase B (511 aa).

The N-terminal stretch at 1-29 is a signal peptide; sequence MNLLSGWVRPLMLGCGLLGAALSAGSIQA. Positions 30–130 constitute a CBM2 domain; it reads AVCEYRVTNE…AVTGAICGGQ (101 aa). The cysteines at positions 32 and 127 are disulfide-linked. The interval 137–173 is disordered; the sequence is SVASSSSSSSVVSSTPRSSSSSVSSSVPGTSSSSSSS. Residues 180–209 enclose the CBM10 domain; sequence ACNWYGTLTPLCNNTSNGWGYEDGRSCVAR. 2 cysteine pairs are disulfide-bonded: C181–C212 and C191–C206. Residue D276 is the Nucleophile of the active site. The Proton donor role is filled by D393.

The protein belongs to the glycosyl hydrolase 45 (cellulase K) family.

Its subcellular location is the periplasm. The catalysed reaction is Endohydrolysis of (1-&gt;4)-beta-D-glucosidic linkages in cellulose, lichenin and cereal beta-D-glucans.. This enzyme catalyzes the endohydrolysis of 1,4-beta-glucosidic linkages in cellulose, lichenin and cereal beta-D-glucans. EGB is most active against barley beta-glucan, but showed significant activity against amorphous and crystalline cellulose. The chain is Endoglucanase B (celB) from Cellvibrio japonicus (strain Ueda107) (Pseudomonas fluorescens subsp. cellulosa).